Here is an 847-residue protein sequence, read N- to C-terminus: MDFKEYRQRGKEMVDYIADYLENIRERRVFPDVSPGYMRQLLPESAPIEGEPWPKIFSDVERIVMPGITHWQSPHMHAYFPALNSMPSLLGDMLADAINCLGFTWASSPACTELEIIVMNWLGKMIGLPDAFLHLSSQSQGGGVLQTTASEATLVCLLAGRTRAIQRFHERHPGYQDAEINARLVAYCSDQAHSSVEKAALIGLVRMRYIEADDDLAMRGKLLREAIEDDIKQGLVPFWVCATLGTTGSCSFDNLEEIGIVCAEHHLWLHVDAAYAGSAFICPEFRTWLRGIERADSIAFNPSKWLMVHFDATALWVRDSTAVHRTFNVEPLYLQHENSGVAVDFMHWQIPLSRRFRALKVWFVLRSYGIKGLQRHIREGVRLAQKFEALVLADHRFELPAKRHLGLVVFRIRGDNEITEKLLKRLNHRGNLHCIPSSLKGQYVIRFTITSTHTTLDDIVKDWMEIRQVASTVLEEMNITISNRVYLKETKEKNEAFGSSLLLSNSPLSPKVVNGSFAAIFDADEFLAKTYAGVRIAHQESPSMRRRVRGILMSGKQFSLDSHMDVVVQTTLDAGNGATRTSTTNSYGHTTSAAQANSERQASIQEDNEESPEETELLSLCRTSNVPSPEHAHSLSTPSRSCSSSSHSLIHSLTQSSPRSSPVNQFRPITLCAVPSQSQLSMPLAMPLPNRNVTVSVDSLLNPVTTCNVYHGKRFLEPLENLAQTSASFSSSIFRLPTPIATPTRESPEDPDWPAKTFSQLLLERYSSQSQSLGNNSSTESSSLSGGATPTPTPMSSLDELVTPLLLSFASPSQPMLSAHGIGEGQREQGSDSDATVCSTTSSMESL.

2 residues coordinate substrate: Phe-80 and His-193. Lys-304 carries the post-translational modification N6-(pyridoxal phosphate)lysine. The segment covering 575 to 605 (GNGATRTSTTNSYGHTTSAAQANSERQASIQ) has biased composition (polar residues). 3 disordered regions span residues 575–662 (GNGA…RSSP), 769–798 (QSQS…MSSL), and 813–847 (SQPM…MESL). Acidic residues predominate over residues 606-616 (EDNEESPEETE). Low complexity-rich tracts occupy residues 634–657 (SLST…TQSS) and 769–787 (QSQS…LSGG). The segment covering 832–847 (DSDATVCSTTSSMESL) has biased composition (polar residues).

It belongs to the group II decarboxylase family. Homodimer. It depends on pyridoxal 5'-phosphate as a cofactor. As to expression, localized primarily to the photoreceptors, in the eye.

It catalyses the reaction L-histidine + H(+) = histamine + CO2. Its function is as follows. Required in photoreceptor transmitter synthesis. Catlayzes the conversion of L-histidine to histamine. The polypeptide is Histidine decarboxylase (Hdc) (Drosophila melanogaster (Fruit fly)).